Consider the following 45-residue polypeptide: MKMFLFLNESYIFDRLRMWSIVLWHSCVFVCAECENANYRGAEVP.

It belongs to the UPF0377 family.

In Saccharomyces cerevisiae (strain ATCC 204508 / S288c) (Baker's yeast), this protein is Putative UPF0377 protein YJL222W-B.